The sequence spans 414 residues: Enolase (414 aa).

A (2R)-2-phosphoglycerate-binding site is contributed by Q156. E200 (proton donor) is an active-site residue. Mg(2+)-binding residues include D236, E281, and D308. K333, R362, S363, and K384 together coordinate (2R)-2-phosphoglycerate. Residue K333 is the Proton acceptor of the active site.

Belongs to the enolase family. Mg(2+) is required as a cofactor.

The protein localises to the cytoplasm. It localises to the secreted. The protein resides in the cell surface. The catalysed reaction is (2R)-2-phosphoglycerate = phosphoenolpyruvate + H2O. It participates in carbohydrate degradation; glycolysis; pyruvate from D-glyceraldehyde 3-phosphate: step 4/5. In terms of biological role, catalyzes the reversible conversion of 2-phosphoglycerate (2-PG) into phosphoenolpyruvate (PEP). It is essential for the degradation of carbohydrates via glycolysis. This is Enolase from Methanosphaera stadtmanae (strain ATCC 43021 / DSM 3091 / JCM 11832 / MCB-3).